The chain runs to 398 residues: Phosphoglycerate kinase (398 aa).

Substrate-binding positions include 20 to 22, Arg-35, 58 to 61, Arg-118, and Arg-155; these read DLN and HLGR. ATP is bound by residues Lys-206, Gly-295, Glu-326, and 354 to 357; that span reads GGDS.

This sequence belongs to the phosphoglycerate kinase family. As to quaternary structure, monomer.

Its subcellular location is the cytoplasm. It catalyses the reaction (2R)-3-phosphoglycerate + ATP = (2R)-3-phospho-glyceroyl phosphate + ADP. It participates in carbohydrate degradation; glycolysis; pyruvate from D-glyceraldehyde 3-phosphate: step 2/5. The chain is Phosphoglycerate kinase from Onion yellows phytoplasma (strain OY-M).